A 638-amino-acid chain; its full sequence is Threonine--tRNA ligase 2 (638 aa).

Positions Met1–Thr64 constitute a TGS domain. Residues Asp245–Pro535 are catalytic. Residues Cys336, His387, and His512 each contribute to the Zn(2+) site.

It belongs to the class-II aminoacyl-tRNA synthetase family. As to quaternary structure, homodimer. Requires Zn(2+) as cofactor.

It is found in the cytoplasm. The enzyme catalyses tRNA(Thr) + L-threonine + ATP = L-threonyl-tRNA(Thr) + AMP + diphosphate + H(+). In terms of biological role, catalyzes the attachment of threonine to tRNA(Thr) in a two-step reaction: L-threonine is first activated by ATP to form Thr-AMP and then transferred to the acceptor end of tRNA(Thr). Also edits incorrectly charged L-seryl-tRNA(Thr). In Bacillus subtilis (strain 168), this protein is Threonine--tRNA ligase 2 (thrZ).